The following is a 312-amino-acid chain: uncharacterized protein (312 aa).

The protein belongs to the mimivirus R69 family.

This is an uncharacterized protein from Acanthamoeba polyphaga mimivirus (APMV).